Reading from the N-terminus, the 929-residue chain is Valine--tRNA ligase (929 aa).

The 'HIGH' region signature appears at 59–69 (PNVTGSLHMGH). The 'KMSKS' region signature appears at 557-561 (KMSKS). Lysine 560 serves as a coordination point for ATP. Residues 862–929 (LVDLDALRGR…LARQRLSDLG (68 aa)) are a coiled coil.

This sequence belongs to the class-I aminoacyl-tRNA synthetase family. ValS type 1 subfamily. As to quaternary structure, monomer.

The protein localises to the cytoplasm. The catalysed reaction is tRNA(Val) + L-valine + ATP = L-valyl-tRNA(Val) + AMP + diphosphate. In terms of biological role, catalyzes the attachment of valine to tRNA(Val). As ValRS can inadvertently accommodate and process structurally similar amino acids such as threonine, to avoid such errors, it has a 'posttransfer' editing activity that hydrolyzes mischarged Thr-tRNA(Val) in a tRNA-dependent manner. The polypeptide is Valine--tRNA ligase (Prochlorococcus marinus (strain MIT 9313)).